Consider the following 225-residue polypeptide: PKHD-type hydroxylase YbiX (225 aa).

A Fe2OG dioxygenase domain is found at 78–177 (TLSTPLFNRY…RVASFMWIQS (100 aa)). The Fe cation site is built by His96, Asp98, and His158. Arg168 is a binding site for 2-oxoglutarate.

Requires Fe(2+) as cofactor. L-ascorbate serves as cofactor.

The protein is PKHD-type hydroxylase YbiX of Escherichia coli (strain K12 / DH10B).